Consider the following 350-residue polypeptide: Biotin synthase (350 aa).

Residues 38–256 (NHVQVSTLLS…IAVARIMMPE (219 aa)) enclose the Radical SAM core domain. Residues Cys53, Cys57, and Cys60 each coordinate [4Fe-4S] cluster. Cys97, Cys128, Cys188, and Arg260 together coordinate [2Fe-2S] cluster.

The protein belongs to the radical SAM superfamily. Biotin synthase family. As to quaternary structure, homodimer. The cofactor is [4Fe-4S] cluster. [2Fe-2S] cluster serves as cofactor.

It carries out the reaction (4R,5S)-dethiobiotin + (sulfur carrier)-SH + 2 reduced [2Fe-2S]-[ferredoxin] + 2 S-adenosyl-L-methionine = (sulfur carrier)-H + biotin + 2 5'-deoxyadenosine + 2 L-methionine + 2 oxidized [2Fe-2S]-[ferredoxin]. Its pathway is cofactor biosynthesis; biotin biosynthesis; biotin from 7,8-diaminononanoate: step 2/2. Functionally, catalyzes the conversion of dethiobiotin (DTB) to biotin by the insertion of a sulfur atom into dethiobiotin via a radical-based mechanism. The polypeptide is Biotin synthase (Aliivibrio fischeri (strain ATCC 700601 / ES114) (Vibrio fischeri)).